The primary structure comprises 520 residues: Probable E3 ubiquitin-protein ligase rbrA (520 aa).

Residues 1–42 show a composition bias toward acidic residues; the sequence is MTDDEMYEDYDVDDDSAEESGNESLDDTEYDDAATQEFDFDE. A disordered region spans residues 1 to 51; that stretch reads MTDDEMYEDYDVDDDSAEESGNESLDDTEYDDAATQEFDFDENQPQRSLGK. Positions 135 to 354 are TRIAD supradomain; sequence GNVSCLICLE…GGYYNCNKYD (220 aa). Zn(2+)-binding residues include cysteine 139, cysteine 142, cysteine 156, histidine 158, cysteine 161, cysteine 164, cysteine 184, cysteine 189, cysteine 228, cysteine 233, cysteine 250, cysteine 252, cysteine 257, cysteine 260, histidine 268, cysteine 273, cysteine 300, and cysteine 303. The RING-type 1 zinc finger occupies 139-189; sequence CLICLEDYPPTQTFALICNHRYCLPCYKNYLEIKVSEGPECIYTPCPAPKC. The segment at 208-273 adopts an IBR-type zinc-finger fold; the sequence is ERFNNFILKS…EIGDHMPCPC (66 aa). Residues 300–333 form an RING-type 2; atypical zinc finger; it reads CPECRSPIEKNGGCMHMTCRKNAGGCGFEFCWLC. Cysteine 313 is an active-site residue. The Zn(2+) site is built by cysteine 318, cysteine 325, cysteine 330, cysteine 333, histidine 340, and cysteine 350.

The protein belongs to the RBR family.

The catalysed reaction is [E2 ubiquitin-conjugating enzyme]-S-ubiquitinyl-L-cysteine + [acceptor protein]-L-lysine = [E2 ubiquitin-conjugating enzyme]-L-cysteine + [acceptor protein]-N(6)-ubiquitinyl-L-lysine.. It participates in protein modification; protein ubiquitination. Might act as an E3 ubiquitin-protein ligase. Appears to be required for normal cell-type proportioning and cell sorting during multicellular development. In addition to being necessary for a normal percentage of prestalk cells and the organization of the slug, rbrA is also necessary for spore cell viability. This chain is Probable E3 ubiquitin-protein ligase rbrA (rbrA), found in Dictyostelium discoideum (Social amoeba).